Here is a 428-residue protein sequence, read N- to C-terminus: Adenylosuccinate synthetase (428 aa).

GTP contacts are provided by residues 12-18 (GDEGKGK) and 40-42 (GHT). Catalysis depends on Asp-13, which acts as the Proton acceptor. The Mg(2+) site is built by Asp-13 and Gly-40. Residues 13–16 (DEGK), 38–41 (NAGH), Thr-130, Arg-144, Gln-225, Thr-240, and Arg-304 contribute to the IMP site. Catalysis depends on His-41, which acts as the Proton donor. Position 300–306 (300–306 (TTTGRPR)) interacts with substrate. Residues Arg-306, 332–334 (KLD), and 414–416 (SVG) contribute to the GTP site.

The protein belongs to the adenylosuccinate synthetase family. In terms of assembly, homodimer. Mg(2+) serves as cofactor.

It is found in the cytoplasm. The catalysed reaction is IMP + L-aspartate + GTP = N(6)-(1,2-dicarboxyethyl)-AMP + GDP + phosphate + 2 H(+). The protein operates within purine metabolism; AMP biosynthesis via de novo pathway; AMP from IMP: step 1/2. Functionally, plays an important role in the de novo pathway of purine nucleotide biosynthesis. Catalyzes the first committed step in the biosynthesis of AMP from IMP. The protein is Adenylosuccinate synthetase of Caldanaerobacter subterraneus subsp. tengcongensis (strain DSM 15242 / JCM 11007 / NBRC 100824 / MB4) (Thermoanaerobacter tengcongensis).